The sequence spans 212 residues: Deoxyribose-phosphate aldolase (212 aa).

Asp89 (proton donor/acceptor) is an active-site residue. The Schiff-base intermediate with acetaldehyde role is filled by Lys151. Lys180 acts as the Proton donor/acceptor in catalysis.

Belongs to the DeoC/FbaB aldolase family. DeoC type 1 subfamily.

It localises to the cytoplasm. It carries out the reaction 2-deoxy-D-ribose 5-phosphate = D-glyceraldehyde 3-phosphate + acetaldehyde. It participates in carbohydrate degradation; 2-deoxy-D-ribose 1-phosphate degradation; D-glyceraldehyde 3-phosphate and acetaldehyde from 2-deoxy-alpha-D-ribose 1-phosphate: step 2/2. Catalyzes a reversible aldol reaction between acetaldehyde and D-glyceraldehyde 3-phosphate to generate 2-deoxy-D-ribose 5-phosphate. The protein is Deoxyribose-phosphate aldolase of Clostridium botulinum (strain Langeland / NCTC 10281 / Type F).